A 244-amino-acid polypeptide reads, in one-letter code: tRNA pseudouridine synthase A (244 aa).

Catalysis depends on Asp-52, which acts as the Nucleophile. Residue Tyr-110 coordinates substrate.

Belongs to the tRNA pseudouridine synthase TruA family. As to quaternary structure, homodimer.

The catalysed reaction is uridine(38/39/40) in tRNA = pseudouridine(38/39/40) in tRNA. Formation of pseudouridine at positions 38, 39 and 40 in the anticodon stem and loop of transfer RNAs. The chain is tRNA pseudouridine synthase A from Clostridium botulinum (strain Eklund 17B / Type B).